The chain runs to 308 residues: Acetaldehyde dehydrogenase (308 aa).

Residue 14–17 (TGNI) coordinates NAD(+). Residue cysteine 129 is the Acyl-thioester intermediate of the active site. Residues 160–168 (SAGPGTRQN) and asparagine 280 each bind NAD(+).

Belongs to the acetaldehyde dehydrogenase family.

The enzyme catalyses acetaldehyde + NAD(+) + CoA = acetyl-CoA + NADH + H(+). The sequence is that of Acetaldehyde dehydrogenase from Thermomicrobium roseum (strain ATCC 27502 / DSM 5159 / P-2).